A 1860-amino-acid chain; its full sequence is Golgi-specific brefeldin A-resistance guanine nucleotide exchange factor 1 (1860 aa).

Residues 1–211 form a DCB; DCB:DCB domain and DCB:HUS domain interaction region; sequence MVDKNIYIIQ…EPKNYVGTNM (211 aa). An interaction with RAB1B region spans residues 1–381; sequence MVDKNIYIIQ…SVHDMDYVNP (381 aa). Disordered stretches follow at residues 215-266 and 281-372; these read KMRA…GGMP and AASA…DSAS. The segment covering 227 to 241 has biased composition (basic residues); it reads WKKQKRSPRPPRHMT. 3 stretches are compositionally biased toward polar residues: residues 250-262, 290-301, and 335-351; these read PTPN…SNLT, TDSGLEFSSQTT, and DLQQ…SASV. A phosphoserine mark is found at Ser-350 and Ser-353. Thr-508 is subject to Phosphothreonine. Residues 531 to 551 are HUS; DCB:HUS domain interaction; sequence RIPSFVTELYINYDCDYYCSN. Residues 620–631 show a composition bias toward basic and acidic residues; sequence TREASNTERTAS. Residues 620–666 are disordered; that stretch reads TREASNTERTASDGKAVGMASDIPGLHLPGGGRLPPEHGKSGCSDLE. A Phosphoserine modification is found at Ser-663. The SEC7 domain maps to 693–883; it reads ELIEIKNKKK…EDMYHAIKNE (191 aa). The interval 887–1371 is phosphatidylinositol-phosphate binding; required for translocation to the leading edge and for ARF1 activation upon GPCR signaling; that stretch reads MPEEQTGLVR…PSRPGPSPLI (485 aa). The span at 1285-1297 shows a compositional bias: low complexity; that stretch reads QATARADAPDAGA. Residues 1285 to 1336 form a disordered region; that stretch reads QATARADAPDAGAQSDSELPSYHQNDVSLDRGYTSDSEVYTDHGRPGKIHRS. The span at 1298–1311 shows a compositional bias: polar residues; it reads QSDSELPSYHQNDV. Phosphoserine is present on Ser-1299. Phosphotyrosine is present on Tyr-1317. 3 positions are modified to phosphoserine: Ser-1319, Ser-1321, and Ser-1336. Thr-1338 is modified (phosphothreonine; by AMPK). Disordered stretches follow at residues 1351–1371, 1431–1484, and 1726–1809; these read GKDD…SPLI, CKSQ…DEGV, and PMPM…QPPL. The span at 1433–1447 shows a compositional bias: basic and acidic residues; it reads SQEKRGKSHKYDSKG. Over residues 1465–1474 the composition is skewed to polar residues; sequence TSSQHASRGG. Phosphoserine occurs at positions 1476, 1774, and 1785. Positions 1775-1792 are enriched in low complexity; it reads PRAASSSSPGSPVASSPS.

In terms of assembly, can form homodimers and probably homotetramers. Interacts with COPG1; the interaction is independent of ARF1 activation. Interacts with ARF1, ARF3, ARF4 and ARF5. Interacts with RAB1B (GTP-bound form); required for GBF1 membrane association. Interacts with GGA1, GGA2 and GGA3. Interacts with USO1. Interacts (via SEC7 domain) with PNPLA2 (via C-terminus); the interaction is direct. Interacts with ARMH3. (Microbial infection) Interacts with poliovirus protein 3A. In terms of processing, AMPK-mediated phosphorylation at Thr-1338 is induced by 2-deoxyglucose (2-DG) and AICA ribonucleotide, and occurs during mitosis leading to membrane disassociation and inactivation of ARF1 during mitosis. Ubiquitous.

The protein resides in the golgi apparatus. It localises to the cis-Golgi network. The protein localises to the endoplasmic reticulum-Golgi intermediate compartment. Its subcellular location is the trans-Golgi network. It is found in the cytoplasm. The protein resides in the lipid droplet. It localises to the membrane. Its activity is regulated as follows. Inhibited by brefeldin A (BFA). Inhibited by golgicide A (GCA). Functionally, guanine-nucleotide exchange factor (GEF) for members of the Arf family of small GTPases involved in trafficking in the early secretory pathway; its GEF activity initiates the coating of nascent vesicles via the localized generation of activated ARFs through replacement of GDP with GTP. Recruitment to cis-Golgi membranes requires membrane association of Arf-GDP and can be regulated by ARF1, ARF3, ARF4 and ARF5. Involved in the recruitment of the COPI coat complex to the endoplasmic reticulum exit sites (ERES), and the endoplasmic reticulum-Golgi intermediate (ERGIC) and cis-Golgi compartments which implicates ARF1 activation. Involved in COPI vesicle-dependent retrograde transport from the ERGIC and cis-Golgi compartments to the endoplasmic reticulum (ER). Involved in the trans-Golgi network recruitment of GGA1, GGA2, GGA3, BIG1, BIG2, and the AP-1 adaptor protein complex related to chlathrin-dependent transport; the function requires its GEF activity (probably at least in part on ARF4 and ARF5). Has GEF activity towards ARF1. Has in vitro GEF activity towards ARF5. Involved in the processing of PSAP. Required for the assembly of the Golgi apparatus. The AMPK-phosphorylated form is involved in Golgi disassembly during mitotis and under stress conditions. May be involved in the COPI vesicle-dependent recruitment of PNPLA2 to lipid droplets; however, this function is under debate. In neutrophils, involved in G protein-coupled receptor (GPCR)-mediated chemotaxis und superoxide production. Proposed to be recruited by phosphatidylinositol-phosphates generated upon GPCR stimulation to the leading edge where it recruits and activates ARF1, and is involved in recruitment of GIT2 and the NADPH oxidase complex. Plays a role in maintaining mitochondrial morphology. This Homo sapiens (Human) protein is Golgi-specific brefeldin A-resistance guanine nucleotide exchange factor 1 (GBF1).